The primary structure comprises 163 residues: Protein VASCULATURE COMPLEXITY AND CONNECTIVITY (163 aa).

The signal sequence occupies residues 1-27 (MTKIGGILVCLVIVGLDVAAAILGIQA). 3 helical membrane-spanning segments follow: residues 54–74 (LGLGAAAILVMAHVLLNLVGG), 95–115 (MACLVLTWIVFAVGFGSIVIG), and 133–153 (FLSIGGILCFLHALFCVAYYV).

It belongs to the DESIGUAL family. In terms of assembly, interacts with OPS. Expressed in vascular cells, mostly in hypocotyls, and, to a lower extent, in seedlings, roots, flowers, siliques, developing leaves and inflorescences, but barely in mature leaves and seeds. High levels in leaf primordia.

Its subcellular location is the endoplasmic reticulum membrane. In terms of biological role, required, together with OPS, for embryo provasculature development and cotyledon vascular complexity and connectivity. Necessary, partially redundantly with DEAL2 and DEAL3, to ensure bilateral symmetry development and early leaf margin patterning, probably via the regulation of auxin and CUC2 distribution. Regulates cell proliferation but not cell expansion. The polypeptide is Protein VASCULATURE COMPLEXITY AND CONNECTIVITY (Arabidopsis thaliana (Mouse-ear cress)).